The following is a 258-amino-acid chain: Cholera enterotoxin subunit A (258 aa).

Positions 1–18 (MVKIIFVFFIFLSSFSYA) are cleaved as a signal peptide. NAD(+) is bound by residues 25 to 28 (RADS) and 41 to 43 (MPR). Residue E130 is part of the active site. Cysteines 205 and 217 form a disulfide.

This sequence belongs to the enterotoxin A family. The holotoxin (choleragen) consists of a pentameric ring of B subunits whose central pore is occupied by the A subunit. The A subunit contains two chains, A1 and A2, linked by a disulfide bridge. Interaction with the host protein ARF6 causes a conformation change so that the enterotoxin subunit A1 can bind NAD and catalyze the ADP-ribosylation of the host Gs alpha.

Functionally, the A1 chain catalyzes the ADP-ribosylation of Gs alpha, a GTP-binding regulatory protein, to activate the adenylate cyclase. This leads to an overproduction of cAMP and eventually to a hypersecretion of chloride and bicarbonate followed by water, resulting in the characteristic cholera stool. The A2 chain tethers A1 to the pentameric ring. The sequence is that of Cholera enterotoxin subunit A (ctxA) from Vibrio cholerae serotype O1 (strain ATCC 39315 / El Tor Inaba N16961).